The following is a 119-amino-acid chain: Probable cyclase otaY (119 aa).

The protein belongs to the aurE cyclase family.

It functions in the pathway mycotoxin biosynthesis. Probable cyclase; part of the gene cluster that mediates the biosynthesis of ochratoxin A (OTA), a mycotoxin composed of a chlorinated type I polyketide dihydroisocoumarin moiety linked to L-phenylalanine, and demonstrated to have nephrotoxic, immunotoxic, genotoxic, neurotoxic, and teratogenic properties. OtaY is probably involved in the polyketide cyclization. The pathway begins with the highly reducing polyketide synthase otaA that catalyzes the formation of the isocoumarin group during the initial stages of biosynthesis, starting from one acetate and 4 malonate units, to originate the characteristic pentaketide skeleton 7-methylmellein (7-MM) of the OTA molecule. The newly identified cyclase otaY might be involved in the polyketide cyclization reaction during the initial steps of the OTA biosynthesis. 7-MM is then oxidized into 7-carboxymellein (also called ochratoxin beta) by the cytochrome P450 monooxygenase otaC. The NRPS encoded by the otaB gene is involved in the linking of phenylalanine to the dihydroisocoumarin ring. The reaction catalyzed by NRPS results in the production of ochratoxin B (OTB), which is the non-chlorinated analog of OTA and which subsequently serves as the substrate of the halogenase otaD for chlorination activity to form the final molecular structure of OTA, containing a chlorine atom in the C-5 position of the molecule. The polypeptide is Probable cyclase otaY (Aspergillus niger (strain ATCC MYA-4892 / CBS 513.88 / FGSC A1513)).